The chain runs to 600 residues: MHKYRTHNCNELQISDVRKEVKLSGWVHRRRDHGNLVFIDLRDHYGITQIVFTDQNQQLMEDASRLRYESVITVRGTIVARSNDTINDTLPTGHIEVLAGEFIVESAADTLPFVINTEKDAPEETRLKHRFLDLRREKLHNNIILRSQIISHIRHLMTGRGFTEFQTPILTASSPEGARDFLVPSRMHPGKFYALPQAPQQFKQLLMVSGFDRYFQIAPCFRDEDARADRSPGEFYQLDVEMSFVTQEDIFSTIEPVMYDLFTKFTAKKVSETPFVRIPYNESMLKYGSDKPDLRNPIIIADVTEIFRDSDFTIFRENIKKGSIVRAIPAPKAAALPRSFFDKMIEFAISEGAGGLGYIQFSETGEAKGPVAKFLSPQQLESLKATASISNGDAVFFASDKKEKAAKLAGKVRIRLGEELDLLEKDCFKFCWITDFPFYELNEDTGKIDFSHNPFSMPQGGLEALEQAKTTEELLELTAYQYDIVCNGIELSSGAIRNHKPEIMYKAFSMAGYSEEEVDKRFGGMIRAFKFGAPPHGGIAPGIDRIVMLLAEATNIREIIAFPLNQQAEDLLMNAPSYVEDKALKELSIMLSPSILKNMK.

Residue Glu-176 coordinates L-aspartate. Residues 200-203 (QQFK) are aspartate. Residues Arg-222 and His-452 each contribute to the L-aspartate site. Residue 222-224 (RDE) participates in ATP binding. Glu-490 lines the ATP pocket. Arg-497 is an L-aspartate binding site. 542–545 (GIDR) serves as a coordination point for ATP.

This sequence belongs to the class-II aminoacyl-tRNA synthetase family. Type 1 subfamily. In terms of assembly, homodimer.

The protein resides in the cytoplasm. It catalyses the reaction tRNA(Asx) + L-aspartate + ATP = L-aspartyl-tRNA(Asx) + AMP + diphosphate. In terms of biological role, aspartyl-tRNA synthetase with relaxed tRNA specificity since it is able to aspartylate not only its cognate tRNA(Asp) but also tRNA(Asn). Reaction proceeds in two steps: L-aspartate is first activated by ATP to form Asp-AMP and then transferred to the acceptor end of tRNA(Asp/Asn). The chain is Aspartate--tRNA(Asp/Asn) ligase from Rickettsia felis (strain ATCC VR-1525 / URRWXCal2) (Rickettsia azadi).